A 245-amino-acid polypeptide reads, in one-letter code: Cypemycin N-terminal methyltransferase (245 aa).

This sequence belongs to the methyltransferase superfamily.

It carries out the reaction N-terminal L-alanyl-[cypemycin] + 2 S-adenosyl-L-methionine = N-terminal N,N-dimethyl-L-alanyl-[cypemycin] + 2 S-adenosyl-L-homocysteine + 3 H(+). In terms of biological role, involved in the biosynthesis of the lanaridin cypemycin. The enzyme can methylate a variety of oligopeptides, cyclic peptides and the epsilon-amino group of lysine. The protein is Cypemycin N-terminal methyltransferase of Streptomyces sp.